A 483-amino-acid chain; its full sequence is Probable glycosyltransferase 4 (483 aa).

Topologically, residues 1-26 (MSKLQDRHGGEAAADVGRRARHQRLL) are cytoplasmic. A helical; Signal-anchor for type II membrane protein membrane pass occupies residues 27-47 (LSFPVFPIVLLLLAPCTIFFF). The Lumenal portion of the chain corresponds to 48 to 483 (TSGDVPLPRI…KKTSRAARPM (436 aa)). Residues 71-119 (AVAADTSPPPPSPPSSSPPPLSFPPPPPPPSSPPPPALPVVDDHSDTQR) are disordered. A compositionally biased stretch (pro residues) spans 77-108 (SPPPPSPPSSSPPPLSFPPPPPPPSSPPPPAL). N-linked (GlcNAc...) asparagine glycosylation occurs at asparagine 448.

It belongs to the glycosyltransferase 34 family.

Its subcellular location is the golgi apparatus membrane. Probable glycosyltransferase that may be involved in the biosynthesis of xyloglucan. The sequence is that of Probable glycosyltransferase 4 from Oryza sativa subsp. indica (Rice).